Reading from the N-terminus, the 463-residue chain is Nuclear hormone receptor family member nhr-3 (463 aa).

The segment at residues serine 50–proline 125 is a DNA-binding region (nuclear receptor). NR C4-type zinc fingers lie at residues cysteine 53–cysteine 73 and cysteine 89–cysteine 113. Positions aspartate 121 to glycine 131 are enriched in basic and acidic residues. The disordered stretch occupies residues aspartate 121 to serine 143. Positions glutamate 199–arginine 462 constitute an NR LBD domain.

The protein belongs to the nuclear hormone receptor family.

The protein resides in the nucleus. In terms of biological role, orphan nuclear receptor. This Caenorhabditis elegans protein is Nuclear hormone receptor family member nhr-3 (nhr-3).